A 515-amino-acid polypeptide reads, in one-letter code: Envelope glycoprotein (515 aa).

The signal sequence occupies residues M1–T33. The Extracellular portion of the chain corresponds to W34 to T435. Residues N129 and N203 are each glycosylated (N-linked (GlcNAc...) asparagine; by host). The CXXC signature appears at C212–C215. 3 disulfides stabilise this stretch: C212/C215, C212/C392, and C384/C391. N-linked (GlcNAc...) asparagine; by host glycosylation is found at N230, N251, N256, N271, and N287. Residues V304–V324 are fusion peptide. Coiled coils occupy residues Q330–I376 and N388–W420. The N-linked (GlcNAc...) asparagine; by host glycan is linked to N351. Residues A365–Q381 form an immunosuppression region. The CX6CC motif lies at C384 to C392. N-linked (GlcNAc...) asparagine; by host glycosylation occurs at N398. A helical transmembrane segment spans residues I436–L456. C455 carries the S-palmitoyl cysteine; by host lipid modification. Residues I457 to P515 lie on the Cytoplasmic side of the membrane.

As to quaternary structure, the mature envelope protein (Env) consists of a trimer of SU-TM heterodimers attached by a labile interchain disulfide bond. Specific enzymatic cleavages in vivo yield mature proteins. Envelope glycoproteins are synthesized as an inactive precursor that is N-glycosylated and processed likely by host cell furin or by a furin-like protease in the Golgi to yield the mature SU and TM proteins. The cleavage site between SU and TM requires the minimal sequence [KR]-X-[KR]-R. In terms of processing, the CXXC motif is highly conserved across a broad range of retroviral envelope proteins. It is thought to participate in the formation of a labile disulfide bond possibly with the CX6CC motif present in the transmembrane protein. Isomerization of the intersubunit disulfide bond to an SU intrachain disulfide bond is thought to occur upon receptor recognition in order to allow membrane fusion. Post-translationally, the transmembrane protein is palmitoylated.

The protein resides in the virion membrane. It is found in the host cell membrane. Its function is as follows. The surface protein (SU) attaches the virus to the host cell by binding to its receptor. This interaction triggers the refolding of the transmembrane protein (TM) and is thought to activate its fusogenic potential by unmasking its fusion peptide. Fusion occurs at the host cell plasma membrane. Functionally, the transmembrane protein (TM) acts as a class I viral fusion protein. Under the current model, the protein has at least 3 conformational states: pre-fusion native state, pre-hairpin intermediate state, and post-fusion hairpin state. During viral and target cell membrane fusion, the coiled coil regions (heptad repeats) assume a trimer-of-hairpins structure, positioning the fusion peptide in close proximity to the C-terminal region of the ectodomain. The formation of this structure appears to drive apposition and subsequent fusion of viral and target cell membranes. Membranes fusion leads to delivery of the nucleocapsid into the cytoplasm. The polypeptide is Envelope glycoprotein (env) (Bos taurus (Bovine)).